The sequence spans 343 residues: Signal peptide peptidase 2 (343 aa).

At 1–19 the chain is on the lumenal side; sequence MKTHERAANLALAGLSLAP. The helical transmembrane segment at 20–40 threads the bilayer; it reads LVVKVNPNANVILTACLAVYV. Residues 41–62 are Cytoplasmic-facing; the sequence is GCYRSVKPTPPAETMSKEHAMR. Residues 63–83 form a helical membrane-spanning segment; the sequence is FPLVGSAMLLSLFLLFKFLSK. The Lumenal portion of the chain corresponds to 84 to 89; that stretch reads DLVNTV. The helical transmembrane segment at 90–110 threads the bilayer; the sequence is LTAYFFILGIAALCATLLPSI. The Cytoplasmic segment spans residues 111–141; sequence KRFLPKEWNDNAIVWRAPLFHSLSVEFTRSQ. A helical membrane pass occupies residues 142 to 162; the sequence is VVASIPGFFFCIWYAAKKHWL. The Lumenal segment spans residues 163–165; sequence ANN. Residues 166-186 traverse the membrane as a helical segment; it reads VLGISFCIQGIEMLSLGSFKT. Over 187 to 188 the chain is Cytoplasmic; it reads GA. A helical transmembrane segment spans residues 189–209; sequence ILLSGLFFYDIFWVFFTPVMV. Residue Asp198 is part of the active site. Residues 210 to 230 are Lumenal-facing; sequence SVAKSFDAPIKLLFPTGDAAR. The chain crosses the membrane as a helical span at residues 231–251; the sequence is PFSMLGLGDIVIPGIFVALAL. The active site involves Asp239. Residues 252-266 are Cytoplasmic-facing; sequence RFDVSRGIKNRYFNS. A helical membrane pass occupies residues 267–287; the sequence is AFLGYTVGLTVTIIVMNWFQA. Topologically, residues 288 to 290 are lumenal; that stretch reads AQP. The PAL signature appears at 290–292; it reads PAL. Residues 291–311 traverse the membrane as a helical segment; sequence ALLYIVPGVIGFVAVHCLWNG. The Cytoplasmic segment spans residues 312–343; it reads EVKPLLEYNESKAEEEEACEEDTDSKQNKKKE. The segment covering 324–334 has biased composition (acidic residues); the sequence is AEEEEACEEDT. Positions 324 to 343 are disordered; it reads AEEEEACEEDTDSKQNKKKE. The short motif at 340 to 343 is the Endoplasmic reticulum targeting signal element; that stretch reads KKKE.

It belongs to the peptidase A22B family. Ubiquitous.

The protein resides in the endoplasmic reticulum membrane. Its function is as follows. Intramembrane-cleaving aspartic protease (I-CLiP) that cleaves type II membrane signal peptides in the hydrophobic plane of the membrane. Catalyzes intramembrane proteolysis of some signal peptides after they have been cleaved from a preprotein, resulting in the release of the fragment from the ER membrane into the cytoplasm. The polypeptide is Signal peptide peptidase 2 (SPP2) (Oryza sativa subsp. japonica (Rice)).